Here is a 317-residue protein sequence, read N- to C-terminus: tRNA dimethylallyltransferase (317 aa).

19–26 (GPTASGKS) is an ATP binding site. A substrate-binding site is contributed by 21-26 (TASGKS). The tract at residues 49-52 (DSAQ) is interaction with substrate tRNA.

This sequence belongs to the IPP transferase family. Monomer. It depends on Mg(2+) as a cofactor.

It catalyses the reaction adenosine(37) in tRNA + dimethylallyl diphosphate = N(6)-dimethylallyladenosine(37) in tRNA + diphosphate. Functionally, catalyzes the transfer of a dimethylallyl group onto the adenine at position 37 in tRNAs that read codons beginning with uridine, leading to the formation of N6-(dimethylallyl)adenosine (i(6)A). This chain is tRNA dimethylallyltransferase, found in Erythrobacter litoralis (strain HTCC2594).